The sequence spans 183 residues: Dual-action ribosomal maturation protein DarP (183 aa).

The disordered stretch occupies residues 1 to 21 (MKQKPEDWLNDVPDNQEDDED).

This sequence belongs to the DarP family.

The protein localises to the cytoplasm. Functionally, member of a network of 50S ribosomal subunit biogenesis factors which assembles along the 30S-50S interface, preventing incorrect 23S rRNA structures from forming. Promotes peptidyl transferase center (PTC) maturation. The chain is Dual-action ribosomal maturation protein DarP from Pectobacterium atrosepticum (strain SCRI 1043 / ATCC BAA-672) (Erwinia carotovora subsp. atroseptica).